Here is a 295-residue protein sequence, read N- to C-terminus: Non-selective voltage-gated ion channel VDAC2 (295 aa).

Lysine 24 and lysine 32 together coordinate ATP. At lysine 32 the chain carries N6-acetyllysine; alternate. Lysine 32 is modified (N6-succinyllysine; alternate). Lysine 32 is covalently cross-linked (Glycyl lysine isopeptide (Lys-Gly) (interchain with G-Cter in ubiquitin); alternate). The next 2 membrane-spanning stretches (beta stranded) occupy residues 38-47 (LVKLDVKTKS) and 51-59 (VEFSTSGSS). Lysine 65 participates in a covalent cross-link: Glycyl lysine isopeptide (Lys-Gly) (interchain with G-Cter in ubiquitin). A beta stranded transmembrane segment spans residues 66 to 76 (VSGTLETKYKW). Residue tyrosine 79 is modified to Phosphotyrosine. Transmembrane regions (beta stranded) follow at residues 81 to 88 (LTFTEKWN), 92 to 101 (TLGTEIAIED), and 107 to 116 (LKLTFDTTFS). Threonine 119 is subject to Phosphothreonine. Lysine 121 carries the N6-acetyllysine; alternate modification. Lysine 121 is covalently cross-linked (Glycyl lysine isopeptide (Lys-Gly) (interchain with G-Cter in ubiquitin); alternate). Lysine 122 is covalently cross-linked (Glycyl lysine isopeptide (Lys-Gly) (interchain with G-Cter in ubiquitin)). The next 4 beta stranded transmembrane spans lie at 123-132 (SGKIKSAYKR), 135-142 (INLGCDVD), 149-157 (AIHGSAVFG), and 162-170 (LAGYQMTFD). A Glycyl lysine isopeptide (Lys-Gly) (interchain with G-Cter in ubiquitin) cross-link involves residue lysine 173. 6 beta stranded membrane-spanning segments follow: residues 175-187 (KLTRSNFAVGYRT), 190-197 (FQLHTNVN), 201-210 (EFGGSIYQKV), 214-223 (FDTSVNLAWT), 230-239 (RFGIAAKYQL), and 243-250 (ASISAKVN). Tyrosine 237 carries the phosphotyrosine modification. Serine 252 carries the phosphoserine modification. Residues 254–256 (LIG) and 272–276 (SALVD) contribute to the NAD(+) site. 2 beta stranded membrane passes run 254–263 (LIGVGYTQTL) and 266–275 (GVKLTLSALV). Residue lysine 278 is modified to N6-acetyllysine; alternate. Lysine 278 participates in a covalent cross-link: Glycyl lysine isopeptide (Lys-Gly) (interchain with G-Cter in ubiquitin); alternate. Residues 285–294 (HKLGLALELE) form a beta stranded membrane-spanning segment.

Belongs to the eukaryotic mitochondrial porin family. Monomer, homodimer and higher order oligomers; formation of higher order structures is necessary for scramblase activity. Interacts with ARMC12 in a TBC1D21-dependent manner. Interacts with KLC3. Interacts with SPATA33. Interacts with PPP3CC in a SPATA33-dependent manner. Ubiquitinated by PRKN during mitophagy, leading to its degradation and enhancement of mitophagy. Deubiquitinated by USP30. Highly expressed in heart, kidney, brain and ascitic tumor with very low levels in liver. Expressed in the head region of epididymal sperm.

The protein resides in the mitochondrion outer membrane. Its subcellular location is the membrane. The catalysed reaction is chloride(in) = chloride(out). It carries out the reaction K(+)(in) = K(+)(out). The enzyme catalyses a 1,2-diacyl-sn-glycero-3-phospho-L-serine(in) = a 1,2-diacyl-sn-glycero-3-phospho-L-serine(out). It catalyses the reaction a 1,2-diacyl-sn-glycero-3-phosphocholine(in) = a 1,2-diacyl-sn-glycero-3-phosphocholine(out). The catalysed reaction is a 1,2-diacyl-sn-glycero-3-phospho-(1D-myo-inositol)(in) = a 1,2-diacyl-sn-glycero-3-phospho-(1D-myo-inositol)(out). Non-selective voltage-gated ion channel that mediates the transport of anions and cations through the mitochondrion outer membrane and plasma membrane. The channel adopts an open conformation at zero mV and a closed conformation at both positive and negative potentials. There are two populations of channels; the main that functions in a lower open-state conductance with lower ion selectivity, that switch, in a voltage-dependent manner, from the open to a low-conducting 'closed' state and the other that has a normal ion selectivity in the typical high conductance, 'open' state. Binds various lipids, including the sphingolipid ceramide, the phospholipid phosphatidylcholine, and the sterols cholesterol and oxysterol. Binding of ceramide promotes the mitochondrial outer membrane permeabilization (MOMP) apoptotic pathway. In terms of biological role, catalyzes the scrambling of phospholipids across the outer mitochondrial membrane; the mechanism is unrelated to channel activity and is capable of translocating both anionic and zwitterionic phospholipids. In Rattus norvegicus (Rat), this protein is Non-selective voltage-gated ion channel VDAC2.